The sequence spans 90 residues: Alpha-latrotoxin associated low molecular weight protein (90 aa).

The first 18 residues, 1–18, serve as a signal peptide directing secretion; it reads MNKLFFVVFLCLIISVLA.

Belongs to the arthropod CHH/MIH/GIH/VIH hormone family. Expressed by the venom gland.

It is found in the secreted. In terms of biological role, may increase the toxicity of alpha-latrotoxin and/or other venom components. Is non-toxic to mice and to the cockroach Periplaneta americana. The protein is Alpha-latrotoxin associated low molecular weight protein of Latrodectus geometricus (Brown widow spider).